A 265-amino-acid chain; its full sequence is Homeobox protein CDX-1 (265 aa).

The segment at 9-152 is disordered; sequence KDSPVYPGPA…GGGGVSGKTR (144 aa). Positions 30 to 43 are enriched in pro residues; it reads YGPPAPPPAPPQYP. A compositionally biased stretch (low complexity) spans 73-92; sequence AAAYGPGPAAPAASPASLAF. Positions 93–108 are enriched in pro residues; the sequence is GPPPDFSPVPAPPGPG. The span at 110 to 126 shows a compositional bias: low complexity; it reads GLLAQPLGGPGTPSSPG. The homeobox DNA-binding region spans 154–213; sequence KDKYRVVYTDHQRLELEKEFHYSRYITIRRKSELAANLGLTERQVKIWFQNRRAKERKVN. Positions 157–178 are interaction with DNA; it reads YRVVYTDHQRLELEKEFHYSRY. Residues 196 to 207 are interaction with 5-mCpG DNA; that stretch reads RQVKIWFQNRRA. The segment covering 206–217 has biased composition (basic residues); the sequence is RAKERKVNKKKQ. Positions 206 to 265 are disordered; that stretch reads RAKERKVNKKKQQQQQPPQPPTAHDITATPARPSLGGLCPSNTSLLATSSPMPVKEEFLP. A compositionally biased stretch (polar residues) spans 245 to 256; the sequence is PSNTSLLATSSP.

Belongs to the Caudal homeobox family.

Its subcellular location is the nucleus. Functionally, plays a role in transcriptional regulation. Involved in activated KRAS-mediated transcriptional activation of PRKD1 in colorectal cancer (CRC) cells. Binds to the PRKD1 promoter in colorectal cancer (CRC) cells. Could play a role in the terminal differentiation of the intestine. Binds preferentially to methylated DNA. The protein is Homeobox protein CDX-1 (CDX1) of Pongo pygmaeus (Bornean orangutan).